Here is an 888-residue protein sequence, read N- to C-terminus: Alanine--tRNA ligase (888 aa).

His573, His577, Cys676, and His680 together coordinate Zn(2+).

Belongs to the class-II aminoacyl-tRNA synthetase family. Zn(2+) is required as a cofactor.

The protein resides in the cytoplasm. The enzyme catalyses tRNA(Ala) + L-alanine + ATP = L-alanyl-tRNA(Ala) + AMP + diphosphate. Its function is as follows. Catalyzes the attachment of alanine to tRNA(Ala) in a two-step reaction: alanine is first activated by ATP to form Ala-AMP and then transferred to the acceptor end of tRNA(Ala). Also edits incorrectly charged Ser-tRNA(Ala) and Gly-tRNA(Ala) via its editing domain. The protein is Alanine--tRNA ligase of Corynebacterium glutamicum (strain R).